The primary structure comprises 424 residues: Serine--tRNA ligase (424 aa).

230–232 (TAE) serves as a coordination point for L-serine. Residue 261–263 (RSE) coordinates ATP. Glutamate 284 lines the L-serine pocket. Position 348–351 (348–351 (EISS)) interacts with ATP. An L-serine-binding site is contributed by serine 384.

This sequence belongs to the class-II aminoacyl-tRNA synthetase family. Type-1 seryl-tRNA synthetase subfamily. As to quaternary structure, homodimer. The tRNA molecule binds across the dimer.

Its subcellular location is the cytoplasm. It catalyses the reaction tRNA(Ser) + L-serine + ATP = L-seryl-tRNA(Ser) + AMP + diphosphate + H(+). It carries out the reaction tRNA(Sec) + L-serine + ATP = L-seryl-tRNA(Sec) + AMP + diphosphate + H(+). The protein operates within aminoacyl-tRNA biosynthesis; selenocysteinyl-tRNA(Sec) biosynthesis; L-seryl-tRNA(Sec) from L-serine and tRNA(Sec): step 1/1. Its function is as follows. Catalyzes the attachment of serine to tRNA(Ser). Is also able to aminoacylate tRNA(Sec) with serine, to form the misacylated tRNA L-seryl-tRNA(Sec), which will be further converted into selenocysteinyl-tRNA(Sec). The sequence is that of Serine--tRNA ligase from Streptococcus pneumoniae (strain 70585).